Here is a 618-residue protein sequence, read N- to C-terminus: MSKYTILDKINTPSDLKLVPEGQLKELASELRTFLVDTLDVSGGHFASSLGATELTVALHYVFNTPYDNIVWDVGHQTYIHKILTGRKDKLITIKKDGGISGFPKRSESEYDTFGVGHSSTSISAALGMAIADRLQGKHSSSIAVIGDGAITGGMAFEALNHAGGIKEDILVILNDNEMSISDNVGGLSAHFSKIISGGFYNSIREKGKEVLKNIPPMFEFVKKIETQTKGMFVPANFFEDLGFYYVGPIDGHNVVELVKTLRILKDHKGPKLLHVITKKGKGYTKAESDPIKFHHVAPSFHSGDAQSKASKPTYSNIFGNWICQKAAKDKRLVGVTPAMKEGSDLIRFSQQYPNRYFDVAIAEQHAVTFAGGLACQGLKPVVAIYSTFLQRAYDQVIHDIALQDLDVLYAVDRAGLVGADGATHDGSFDISFMRCIPNHVIMTPSDENETYHMLELGYEYKGPAMVRYPRGAGIGAEITDNLDIKLGKAKLVKKGSRVAILNFGTLLPLANQLADKYHITVVDMRFVKPLDEQMINQICQNHNIVFTLEESSIAGGAGSAVNEYIFANDLSKNITVRNFGLKDEFLTHGTKDLLLDYSNLSFNKIAEVLEKLLSHKK.

Residues H76 and 117 to 119 (GHS) contribute to the thiamine diphosphate site. A Mg(2+)-binding site is contributed by D148. Thiamine diphosphate-binding positions include 149-150 (GA), N177, Y284, and E364. A Mg(2+)-binding site is contributed by N177.

Belongs to the transketolase family. DXPS subfamily. Homodimer. Requires Mg(2+) as cofactor. Thiamine diphosphate serves as cofactor.

The enzyme catalyses D-glyceraldehyde 3-phosphate + pyruvate + H(+) = 1-deoxy-D-xylulose 5-phosphate + CO2. It participates in metabolic intermediate biosynthesis; 1-deoxy-D-xylulose 5-phosphate biosynthesis; 1-deoxy-D-xylulose 5-phosphate from D-glyceraldehyde 3-phosphate and pyruvate: step 1/1. In terms of biological role, catalyzes the acyloin condensation reaction between C atoms 2 and 3 of pyruvate and glyceraldehyde 3-phosphate to yield 1-deoxy-D-xylulose-5-phosphate (DXP). In Francisella philomiragia subsp. philomiragia (strain ATCC 25017 / CCUG 19701 / FSC 153 / O#319-036), this protein is 1-deoxy-D-xylulose-5-phosphate synthase.